Here is a 121-residue protein sequence, read N- to C-terminus: Small ribosomal subunit protein uS13 (121 aa).

Residues 91–121 (HRRGLPVRGQNTKNNARTRKGPSKTVAGKKK) are disordered. The segment covering 106-121 (ARTRKGPSKTVAGKKK) has biased composition (basic residues).

Belongs to the universal ribosomal protein uS13 family. Part of the 30S ribosomal subunit. Forms a loose heterodimer with protein S19. Forms two bridges to the 50S subunit in the 70S ribosome.

Its function is as follows. Located at the top of the head of the 30S subunit, it contacts several helices of the 16S rRNA. In the 70S ribosome it contacts the 23S rRNA (bridge B1a) and protein L5 of the 50S subunit (bridge B1b), connecting the 2 subunits; these bridges are implicated in subunit movement. Contacts the tRNAs in the A and P-sites. The chain is Small ribosomal subunit protein uS13 from Listeria welshimeri serovar 6b (strain ATCC 35897 / DSM 20650 / CCUG 15529 / CIP 8149 / NCTC 11857 / SLCC 5334 / V8).